A 232-amino-acid chain; its full sequence is Orotidine 5'-phosphate decarboxylase (232 aa).

Residues Asp13, Lys35, 62-71 (DLKFHDIPNT), Thr122, Arg182, Gln191, Gly211, and Arg212 contribute to the substrate site. Lys64 acts as the Proton donor in catalysis.

The protein belongs to the OMP decarboxylase family. Type 1 subfamily. As to quaternary structure, homodimer.

It carries out the reaction orotidine 5'-phosphate + H(+) = UMP + CO2. Its pathway is pyrimidine metabolism; UMP biosynthesis via de novo pathway; UMP from orotate: step 2/2. Functionally, catalyzes the decarboxylation of orotidine 5'-monophosphate (OMP) to uridine 5'-monophosphate (UMP). This chain is Orotidine 5'-phosphate decarboxylase, found in Pseudomonas savastanoi pv. phaseolicola (strain 1448A / Race 6) (Pseudomonas syringae pv. phaseolicola (strain 1448A / Race 6)).